Here is a 224-residue protein sequence, read N- to C-terminus: Extracellular protease inhibitor 10 (224 aa).

Residues 1 to 22 (MKSAFTLSLALVAVTATISAAA) form the signal peptide. Kazal-like domains lie at 23–72 (DDNC…ECAS), 90–127 (TSGTVGCPDMCLDVYDPVSDENGKEYSNQCYMEMAKCK), and 156–210 (GYQG…PCPS). An N-linked (GlcNAc...) asparagine glycan is attached at Asn25. 3 disulfides stabilise this stretch: Cys26–Cys56, Cys30–Cys49, and Cys38–Cys70. The interval 69 to 92 (ECASTPASSATPSPVTSSTGSTSG) is disordered. Low complexity predominate over residues 71–92 (ASTPASSATPSPVTSSTGSTSG). 5 disulfides stabilise this stretch: Cys96-Cys126, Cys100-Cys119, Cys162-Cys193, Cys167-Cys186, and Cys175-Cys208. A glycan (N-linked (GlcNAc...) asparagine) is linked at Asn199. The disordered stretch occupies residues 202–224 (MVGEGPCPSQEQQQQQQQQQQKL). Low complexity predominate over residues 211–224 (QEQQQQQQQQQQKL).

In terms of assembly, interacts with host subtilisin-like protease P69B.

It localises to the secreted. Its function is as follows. Secreted effector that interacts with and inhibits the pathogenesis-related P69B subtilisin-like serine protease of host tomato. Inhibition of host proteases by a pathogen extracellular protease inhibitor forms a specific type of defense-counterdefense mechanism between plants and microbial pathogens. The protein is Extracellular protease inhibitor 10 of Phytophthora infestans (Potato late blight agent).